Here is a 129-residue protein sequence, read N- to C-terminus: Class I hydrophobin 11 (129 aa).

Residues 1–19 (MRLTPLLAALALPLLTVLA) form the signal peptide. Cystine bridges form between Cys48–Cys106, Cys55–Cys100, Cys56–Cys89, and Cys107–Cys122.

It belongs to the fungal hydrophobin family. In terms of assembly, self-assembles to form functional amyloid fibrils called rodlets. Self-assembly into fibrillar rodlets occurs spontaneously at hydrophobic:hydrophilic interfaces and the rodlets further associate laterally to form amphipathic monolayers.

It localises to the secreted. Its subcellular location is the cell wall. Aerial growth, conidiation, and dispersal of filamentous fungi in the environment rely upon a capability of their secreting small amphipathic proteins called hydrophobins (HPBs) with low sequence identity. Class I can self-assemble into an outermost layer of rodlet bundles on aerial cell surfaces, conferring cellular hydrophobicity that supports fungal growth, development and dispersal; whereas Class II form highly ordered films at water-air interfaces through intermolecular interactions but contribute nothing to the rodlet structure. In Pleurotus ostreatus (strain PC15) (Oyster mushroom), this protein is Class I hydrophobin 11.